A 423-amino-acid polypeptide reads, in one-letter code: UPF0229 protein PST_0721 (423 aa).

Residues 84 to 109 (AGERIPRPQGGGGGQGAGQASNSGEG) form a disordered region.

This sequence belongs to the UPF0229 family.

The chain is UPF0229 protein PST_0721 from Stutzerimonas stutzeri (strain A1501) (Pseudomonas stutzeri).